We begin with the raw amino-acid sequence, 376 residues long: Protein-tyrosine sulfotransferase 2 (376 aa).

Residues 1–8 (MRLSVRKV) lie on the Cytoplasmic side of the membrane. A helical; Signal-anchor for type II membrane protein membrane pass occupies residues 9 to 25 (LLAVGCALALVLAVQLG). Topologically, residues 26–376 (QQVLECRAVL…NSTSPHLGSS (351 aa)) are lumenal. 77-81 (RSGTT) serves as a coordination point for 3'-phosphoadenylyl sulfate. A disulfide bridge links Cys95 with Cys155. The active-site Proton donor/acceptor is Glu98. Residues 100–104 (RIIPR) are interaction with peptide substrate. 3'-phosphoadenylyl sulfate-binding residues include Arg182, Ser190, and Arg194. Cys224 and Cys232 form a disulfide bridge. Residues Tyr237, 284–293 (STDQVIKPVN), and Lys299 each bind 3'-phosphoadenylyl sulfate. N-linked (GlcNAc...) asparagine glycans are attached at residues Asn342 and Asn367.

Belongs to the protein sulfotransferase family. In terms of assembly, homodimer. Can also form heterodimers with TPST1. Post-translationally, N-glycosylated.

The protein resides in the golgi apparatus membrane. The enzyme catalyses L-tyrosyl-[protein] + 3'-phosphoadenylyl sulfate = O-sulfo-L-tyrosine-[protein] + adenosine 3',5'-bisphosphate + H(+). In terms of biological role, catalyzes the O-sulfation of tyrosine residues within acidic motifs of polypeptides, using 3'-phosphoadenylyl sulfate (PAPS) as cosubstrate. The chain is Protein-tyrosine sulfotransferase 2 (Tpst2) from Rattus norvegicus (Rat).